A 161-amino-acid polypeptide reads, in one-letter code: ATP synthase subunit b (161 aa).

Residues 10-29 form a helical membrane-spanning segment; it reads SVIQLMSFFLLLYILKKFLY.

It belongs to the ATPase B chain family. As to quaternary structure, F-type ATPases have 2 components, F(1) - the catalytic core - and F(0) - the membrane proton channel. F(1) has five subunits: alpha(3), beta(3), gamma(1), delta(1), epsilon(1). F(0) has three main subunits: a(1), b(2) and c(10-14). The alpha and beta chains form an alternating ring which encloses part of the gamma chain. F(1) is attached to F(0) by a central stalk formed by the gamma and epsilon chains, while a peripheral stalk is formed by the delta and b chains.

The protein resides in the cell inner membrane. Functionally, f(1)F(0) ATP synthase produces ATP from ADP in the presence of a proton or sodium gradient. F-type ATPases consist of two structural domains, F(1) containing the extramembraneous catalytic core and F(0) containing the membrane proton channel, linked together by a central stalk and a peripheral stalk. During catalysis, ATP synthesis in the catalytic domain of F(1) is coupled via a rotary mechanism of the central stalk subunits to proton translocation. Component of the F(0) channel, it forms part of the peripheral stalk, linking F(1) to F(0). This Thermosipho melanesiensis (strain DSM 12029 / CIP 104789 / BI429) protein is ATP synthase subunit b.